The following is a 252-amino-acid chain: Phosphate import ATP-binding protein PstB 1 (252 aa).

One can recognise an ABC transporter domain in the interval 6–247; it reads LKVNDLSVYY…PQKQETEDYI (242 aa). 38-45 is a binding site for ATP; the sequence is GPSGSGKS.

It belongs to the ABC transporter superfamily. Phosphate importer (TC 3.A.1.7) family. In terms of assembly, the complex is composed of two ATP-binding proteins (PstB), two transmembrane proteins (PstC and PstA) and a solute-binding protein (PstS).

The protein localises to the cell membrane. It carries out the reaction phosphate(out) + ATP + H2O = ADP + 2 phosphate(in) + H(+). In terms of biological role, part of the ABC transporter complex PstSACB involved in phosphate import. Responsible for energy coupling to the transport system. The sequence is that of Phosphate import ATP-binding protein PstB 1 from Streptococcus mutans serotype c (strain ATCC 700610 / UA159).